Here is a 142-residue protein sequence, read N- to C-terminus: 5a,11a-dehydrotetracycline/5a,11a-dehydrooxytetracycline reductase (142 aa).

This sequence belongs to the pyridoxamine 5'-phosphate oxidase family.

The catalysed reaction is tetracycline + oxidized coenzyme F420-(gamma-L-Glu)(n) + H(+) = 5a,11a-dehydrotetracycline + reduced coenzyme F420-(gamma-L-Glu)(n). It catalyses the reaction oxytetracycline + oxidized coenzyme F420-(gamma-L-Glu)(n) + H(+) = 5a,11a-dehydrooxytetracycline + reduced coenzyme F420-(gamma-L-Glu)(n). It functions in the pathway antibiotic biosynthesis; oxytetracycline biosynthesis. In terms of biological role, involved in the biosynthesis of the antibiotics tetracycline and oxytetracycline. Catalyzes the C(5) reduction of 5a,11a-dehydrooxytetracycline to yield oxytetracycline as a major product. Also catalyzes the C(12) reduction of 5a,11a-dehydrotetracycline (12-dehydrotetracycline) to produce tetracycline as a minor product. This chain is 5a,11a-dehydrotetracycline/5a,11a-dehydrooxytetracycline reductase, found in Streptomyces rimosus subsp. rimosus (strain ATCC 10970 / DSM 40260 / JCM 4667 / NRRL 2234).